Reading from the N-terminus, the 803-residue chain is 3',5'-cyclic-AMP phosphodiesterase 4D (803 aa).

The interval 1 to 103 is disordered; the sequence is MEAEGSSVPA…SGASRVRHRG (103 aa). Phosphoserine occurs at positions 52 and 56. The span at 58-85 shows a compositional bias: pro residues; the sequence is PPPPPPSPQPQLQPPPPPPLPPPPPPPG. Residues S137, S294, S296, S343, and S370 each carry the phosphoserine modification. The disordered stretch occupies residues 338–358; sequence EVEIPSPTQKEKEKKKRPMSQ. A PDEase domain is found at 381–710; that stretch reads VKTEQEDVLA…EWYQSTIPQS (330 aa). A Glycyl lysine isopeptide (Lys-Gly) (interchain with G-Cter in SUMO) cross-link involves residue K382. The active-site Proton donor is H457. Position 457 (H457) interacts with 3',5'-cyclic AMP. Residue H457 coordinates AMP. The Zn(2+) site is built by H461, H497, D498, and D615. D498, D615, N618, Q666, and F669 together coordinate AMP. D498 is a Mg(2+) binding site. D498 lines the Mn(2+) pocket. Residues Q666 and F669 each contribute to the 3',5'-cyclic AMP site. Disordered stretches follow at residues 705–724 and 732–803; these read STIP…GRQG and ELTL…CPDT. The span at 757 to 768 shows a compositional bias: polar residues; that stretch reads CSDSKTLCTQDS. The segment covering 774–789 has biased composition (acidic residues); that stretch reads PLDEQVEEEAVAEEES.

The protein belongs to the cyclic nucleotide phosphodiesterase family. PDE4 subfamily. Homodimer for the long isoforms. Isoforms with truncated N-termini are monomeric. Binds ARRB2. Isoform 33 is part of a ternary complex containing PRKAR2A, PRKAR2B and AKAP9. Identified in a complex composed of RYR1, PDE4D, PKA, FKBP1A and protein phosphatase 1 (PP1). Interacts with PDE4DIP. Isoform 5 interacts (via N-terminal region) with SHANK2 (via proline-rich region); the interaction is increased in a PKA-dependent manner. Isoform 33, isoform 4, isoform 7, isoform 8 and isoform 9 but not isoform 32 and isoform 6 interact with SHANK2. Isoform 31 interacts weakly with SHANK2. It depends on Zn(2+) as a cofactor. Mg(2+) serves as cofactor. Requires Mn(2+) as cofactor. Isoform 1 and isoform 9 are rapidly activated by PKA through phosphorylation. Long isoforms that share a conserved PKA phosphorylation site in the N-terminus are also activated. Post-translationally, sumoylation of long isoforms by PIAS4 augments their activation by PKA phosphorylation and represses their inhibition by ERK phosphorylation. As to expression, expressed in epithelial cells. Isoform 33, isoform 4, isoform 5 and isoform 9 are expressed in brain. Isoform 33, isoform 5, isoform 8 and isoform 9 are expressed in heart (at protein level). Isoform 4 and isoform 6 are strongly expressed in cortex and cerebellum. Isoform 7 is strongly expressed in cortex and testis; weakly expressed in kidney, lung, spleen and cerebellum. Isoform 8 is strongly expressed in lung, heart and liver. Isoform 31, isoform 32, isoform 33, isoform 5 and isoform 9 are widely distributed.

The protein resides in the apical cell membrane. It is found in the cytoplasm. It localises to the membrane. The protein localises to the cytoskeleton. Its subcellular location is the microtubule organizing center. The protein resides in the centrosome. The catalysed reaction is 3',5'-cyclic AMP + H2O = AMP + H(+). The protein operates within purine metabolism; 3',5'-cyclic AMP degradation; AMP from 3',5'-cyclic AMP: step 1/1. With respect to regulation, activated by phosphatidic acid. Inhibited by rolipram. In terms of biological role, hydrolyzes the second messenger cAMP, which is a key regulator of many important physiological processes. The sequence is that of 3',5'-cyclic-AMP phosphodiesterase 4D (Pde4d) from Rattus norvegicus (Rat).